Here is a 488-residue protein sequence, read N- to C-terminus: BTB/POZ domain-containing protein 1 (488 aa).

The span at 1–19 (MASLGSAAAGEPATGAEAE) shows a compositional bias: low complexity. Residues 1 to 42 (MASLGSAAAGEPATGAEAEPGPPAPPPPPPPPPAPSPSALGP) form a disordered region. Positions 20-36 (PGPPAPPPPPPPPPAPS) are enriched in pro residues. The region spanning 75–151 (SDVRFVLGKG…LYSDEVQIGP (77 aa)) is the BTB domain. Residue Arg-85 is modified to Omega-N-methylarginine. The region spanning 190 to 290 (LTQARLFDEP…IRFPLMTIEE (101 aa)) is the BACK domain.

As to quaternary structure, interacts (via C-terminus) with TOP1. Interacts with TRIM5 isoform Delta. Interacts with CUL3. Strongly expressed in heart and skeletal muscle. Weakly expressed in myoblast C2C12 cells, but strongly up-regulated upon their differentiation into myotubes.

It localises to the cytoplasm. Its pathway is protein modification; protein ubiquitination. Functionally, probable substrate-specific adapter of an E3 ubiquitin-protein ligase complex which mediates the ubiquitination and subsequent proteasomal degradation of target proteins. Seems to regulate expression levels and/or subnuclear distribution of TOP1, via an unknown mechanism. May play a role in mesenchymal differentiation where it promotes myogenic differentiation and suppresses adipogenesis. In Mus musculus (Mouse), this protein is BTB/POZ domain-containing protein 1 (Btbd1).